Reading from the N-terminus, the 358-residue chain is MAYYKGAASEGGRAAQLMKRRELAQQEVEFRKKKIEEDLKVSNIENKFAAHYDAVEQQLKSSTIGLVTLDEMKAKQEDIVREREKKLAQKKEEKDKEKLKALEAKLAEKDRQKRQIQALSFDPDDEPDGDDANDGDEGSGKESEKEDVKEELTVVKRSWKEQVPSGVKKIRKNPDVDTSFLPDREREERDNRLREELRQEWAMKQATLKDQEITITFSYWDGSGHRKSVAMKKGNSIYQFLQKCLEMLRKDFSELKTVMADQLMYVKEDLILPHHYTFYDFIVTKARGKSGPLFNFDVYDDIRMISDASVEKEDSHAGKVLLRSWYERNKHIFPASRWEPYDPTKVYDKYTIKDKSKK.

Residues A104 to K113 are compositionally biased toward basic and acidic residues. The segment at A104–E151 is disordered. Acidic residues predominate over residues D122–E137. A compositionally biased stretch (basic and acidic residues) spans G138–E151.

The protein belongs to the FAM50 family.

This Anopheles gambiae (African malaria mosquito) protein is Protein FAM50 homolog.